The following is a 428-amino-acid chain: Bifunctional protein GlmU (428 aa).

The segment at 1 to 221 is pyrophosphorylase; sequence MDIVILAAGC…ERKAMGINTR (221 aa). UDP-N-acetyl-alpha-D-glucosamine-binding positions include 6 to 9, Lys20, Gln74, 79 to 80, 103 to 105, Gly140, and Asn219; these read LAAG, GT, and YGD. Residue Asp105 coordinates Mg(2+). Asn219 is a Mg(2+) binding site. The tract at residues 222–242 is linker; the sequence is ADLAIAESYFQCMKRASFLQS. The N-acetyltransferase stretch occupies residues 243–428; the sequence is GVTLTSPDQV…TTKPEYKTRR (186 aa). Residues Arg308 and Lys326 each contribute to the UDP-N-acetyl-alpha-D-glucosamine site. His338 functions as the Proton acceptor in the catalytic mechanism. UDP-N-acetyl-alpha-D-glucosamine contacts are provided by Tyr341 and Asn352. Acetyl-CoA is bound by residues Ala355, 361-362, Ala398, and Arg415; that span reads NY.

It in the N-terminal section; belongs to the N-acetylglucosamine-1-phosphate uridyltransferase family. This sequence in the C-terminal section; belongs to the transferase hexapeptide repeat family. In terms of assembly, homotrimer. The cofactor is Mg(2+).

It is found in the cytoplasm. It catalyses the reaction alpha-D-glucosamine 1-phosphate + acetyl-CoA = N-acetyl-alpha-D-glucosamine 1-phosphate + CoA + H(+). The enzyme catalyses N-acetyl-alpha-D-glucosamine 1-phosphate + UTP + H(+) = UDP-N-acetyl-alpha-D-glucosamine + diphosphate. The protein operates within nucleotide-sugar biosynthesis; UDP-N-acetyl-alpha-D-glucosamine biosynthesis; N-acetyl-alpha-D-glucosamine 1-phosphate from alpha-D-glucosamine 6-phosphate (route II): step 2/2. It functions in the pathway nucleotide-sugar biosynthesis; UDP-N-acetyl-alpha-D-glucosamine biosynthesis; UDP-N-acetyl-alpha-D-glucosamine from N-acetyl-alpha-D-glucosamine 1-phosphate: step 1/1. Its pathway is bacterial outer membrane biogenesis; LPS lipid A biosynthesis. Its function is as follows. Catalyzes the last two sequential reactions in the de novo biosynthetic pathway for UDP-N-acetylglucosamine (UDP-GlcNAc). The C-terminal domain catalyzes the transfer of acetyl group from acetyl coenzyme A to glucosamine-1-phosphate (GlcN-1-P) to produce N-acetylglucosamine-1-phosphate (GlcNAc-1-P), which is converted into UDP-GlcNAc by the transfer of uridine 5-monophosphate (from uridine 5-triphosphate), a reaction catalyzed by the N-terminal domain. The chain is Bifunctional protein GlmU from Anaplasma marginale (strain Florida).